The primary structure comprises 98 residues: NADH-ubiquinone oxidoreductase chain 4L (98 aa).

A run of 3 helical transmembrane segments spans residues 1–21, 29–49, and 61–81; these read MPSTYINILLAFTMALLGLLL, SLLCLEGLMLALFILSTLMAL, and IVLMVFAACEAALGLALLVMV.

Belongs to the complex I subunit 4L family. In terms of assembly, core subunit of respiratory chain NADH dehydrogenase (Complex I) which is composed of 45 different subunits.

Its subcellular location is the mitochondrion inner membrane. The enzyme catalyses a ubiquinone + NADH + 5 H(+)(in) = a ubiquinol + NAD(+) + 4 H(+)(out). Its function is as follows. Core subunit of the mitochondrial membrane respiratory chain NADH dehydrogenase (Complex I) which catalyzes electron transfer from NADH through the respiratory chain, using ubiquinone as an electron acceptor. Part of the enzyme membrane arm which is embedded in the lipid bilayer and involved in proton translocation. This chain is NADH-ubiquinone oxidoreductase chain 4L (MT-ND4L), found in Choloepus didactylus (Southern two-toed sloth).